The primary structure comprises 683 residues: Actin-binding LIM protein 3 (683 aa).

An N-acetylmethionine modification is found at M1. 4 consecutive LIM zinc-binding domains span residues 21–80 (IQCY…LYGT), 80–140 (TRCD…MASS), 149–208 (SHCA…QFGI), and 208–268 (IKCE…ARAE). Phosphoserine occurs at positions 277, 280, 282, 286, 290, 337, 372, and 373. Positions 372–472 (SSPGYIDSPT…EDISQTSKYS (101 aa)) are disordered. Y376 is subject to Phosphotyrosine. 2 positions are modified to phosphoserine: S379 and S388. Polar residues-rich tracts occupy residues 380–393 (PTYSRQGMSPTFSR), 406–426 (GRSSPYHSQLDVRSSTPTSYQ), and 454–471 (STATKSKTSEDISQTSKY). Phosphoserine occurs at positions 493, 503, and 504. T543 carries the phosphothreonine modification. S567, S576, and S607 each carry phosphoserine. The HP domain maps to 615–683 (MREYKIYPYE…NELKKQARLF (69 aa)). An Omega-N-methylarginine modification is found at R631.

As to quaternary structure, directly interacts with F-actin and ABRA. In terms of tissue distribution, expressed predominantly in heart and brain.

It localises to the cytoplasm. In terms of biological role, may act as scaffold protein. May stimulate ABRA activity and ABRA-dependent SRF transcriptional activity. The polypeptide is Actin-binding LIM protein 3 (ABLIM3) (Homo sapiens (Human)).